The chain runs to 276 residues: Energy-coupling factor transporter ATP-binding protein EcfA1 (276 aa).

The ABC transporter domain maps to 2-237 (IEIKNLKFKY…GSELVDLGLD (236 aa)). 37–44 (GHNGSGKS) provides a ligand contact to ATP.

Belongs to the ABC transporter superfamily. Energy-coupling factor EcfA family. As to quaternary structure, forms a stable energy-coupling factor (ECF) transporter complex composed of 2 membrane-embedded substrate-binding proteins (S component), 2 ATP-binding proteins (A component) and 2 transmembrane proteins (T component).

It is found in the cell membrane. In terms of biological role, ATP-binding (A) component of a common energy-coupling factor (ECF) ABC-transporter complex. Unlike classic ABC transporters this ECF transporter provides the energy necessary to transport a number of different substrates. In Streptococcus thermophilus (strain CNRZ 1066), this protein is Energy-coupling factor transporter ATP-binding protein EcfA1.